We begin with the raw amino-acid sequence, 371 residues long: Peptide chain release factor 2 (371 aa).

N5-methylglutamine is present on glutamine 251.

Belongs to the prokaryotic/mitochondrial release factor family. In terms of processing, methylated by PrmC. Methylation increases the termination efficiency of RF2.

The protein resides in the cytoplasm. Its function is as follows. Peptide chain release factor 2 directs the termination of translation in response to the peptide chain termination codons UGA and UAA. This Pseudarthrobacter chlorophenolicus (strain ATCC 700700 / DSM 12829 / CIP 107037 / JCM 12360 / KCTC 9906 / NCIMB 13794 / A6) (Arthrobacter chlorophenolicus) protein is Peptide chain release factor 2.